Here is a 358-residue protein sequence, read N- to C-terminus: 3-isopropylmalate dehydrogenase (358 aa).

Position 75–88 (75–88) interacts with NAD(+); that stretch reads GPKWETLPPEKQPE. Substrate contacts are provided by R96, R106, R135, and D225. 3 residues coordinate Mg(2+): D225, D249, and D253. Position 283–295 (283–295) interacts with NAD(+); it reads GSAPDIAGKGVAN.

The protein belongs to the isocitrate and isopropylmalate dehydrogenases family. LeuB type 1 subfamily. Homodimer. Mg(2+) serves as cofactor. The cofactor is Mn(2+).

Its subcellular location is the cytoplasm. It carries out the reaction (2R,3S)-3-isopropylmalate + NAD(+) = 4-methyl-2-oxopentanoate + CO2 + NADH. Its pathway is amino-acid biosynthesis; L-leucine biosynthesis; L-leucine from 3-methyl-2-oxobutanoate: step 3/4. Catalyzes the oxidation of 3-carboxy-2-hydroxy-4-methylpentanoate (3-isopropylmalate) to 3-carboxy-4-methyl-2-oxopentanoate. The product decarboxylates to 4-methyl-2 oxopentanoate. In Leptospira interrogans serogroup Icterohaemorrhagiae serovar copenhageni (strain Fiocruz L1-130), this protein is 3-isopropylmalate dehydrogenase.